Here is a 726-residue protein sequence, read N- to C-terminus: Methionine--tRNA ligase (726 aa).

The 'HIGH' region motif lies at 12–22 (PYVNNIPHLGN). Zn(2+) is bound by residues cysteine 143, cysteine 146, cysteine 155, and cysteine 158. Positions 330-334 (KFSKS) match the 'KMSKS' region motif. Lysine 333 serves as a coordination point for ATP. The tRNA-binding domain maps to 562 to 667 (FSEKVCLKVV…DNPIPGERII (106 aa)).

This sequence belongs to the class-I aminoacyl-tRNA synthetase family. MetG type 1 subfamily. Homodimer. It depends on Zn(2+) as a cofactor.

Its subcellular location is the cytoplasm. It catalyses the reaction tRNA(Met) + L-methionine + ATP = L-methionyl-tRNA(Met) + AMP + diphosphate. Its function is as follows. Is required not only for elongation of protein synthesis but also for the initiation of all mRNA translation through initiator tRNA(fMet) aminoacylation. In Borrelia turicatae (strain 91E135), this protein is Methionine--tRNA ligase.